A 512-amino-acid polypeptide reads, in one-letter code: Spastin homolog (512 aa).

Over methionine 1 to glycine 274 the chain is Cytoplasmic. Residues isoleucine 32–arginine 97 adopt a coiled-coil conformation. Residues lysine 110–valine 182 form a disordered region. The tract at residues alanine 115 to asparagine 233 is MTBD. The segment covering alanine 137–glycine 163 has biased composition (basic and acidic residues). The helical intramembrane region spans isoleucine 275–glycine 294. Position 279–286 (glycine 279–threonine 286) interacts with ATP. At glutamate 295–cysteine 512 the chain is on the cytoplasmic side.

Belongs to the AAA ATPase family. Spastin subfamily. In terms of assembly, homohexamer. The homohexamer is stabilized by ATP-binding. The homohexamer may adopt a ring conformation through which microtubules pass prior to being severed. Interacts with microtubules. Interacts (via N-terminus) with tubulin; the interaction is direct.

The protein resides in the membrane. The protein localises to the cytoplasm. Its subcellular location is the cytoskeleton. It localises to the perinuclear region. The catalysed reaction is n ATP + n H2O + a microtubule = n ADP + n phosphate + (n+1) alpha/beta tubulin heterodimers.. In terms of biological role, ATP-dependent microtubule severing protein that specifically recognizes and cuts microtubules. Probably by regulating microtubule remodeling, plays a role in new synapse formation in GABAergic DD (Dorsal D type) neurons. This chain is Spastin homolog, found in Caenorhabditis elegans.